The following is a 493-amino-acid chain: Glycylpeptide N-tetradecanoyltransferase (493 aa).

Position 45 to 48 (45 to 48 (HKFW)) interacts with tetradecanoyl-CoA. A disordered region spans residues 53–73 (VPQITGSGAPAPIEEGPIDDP). Tetradecanoyl-CoA-binding positions include 182-184 (LCV) and 190-194 (SKRLA). Residue leucine 493 is the Proton acceptor; via carboxylate of the active site.

This sequence belongs to the NMT family. Monomer.

It localises to the cytoplasm. The catalysed reaction is N-terminal glycyl-[protein] + tetradecanoyl-CoA = N-tetradecanoylglycyl-[protein] + CoA + H(+). Functionally, adds a myristoyl group to the N-terminal glycine residue of certain cellular proteins. The chain is Glycylpeptide N-tetradecanoyltransferase from Cryptococcus neoformans var. neoformans serotype D (strain B-3501A) (Filobasidiella neoformans).